A 152-amino-acid chain; its full sequence is Flagellar assembly factor FliW (152 aa).

It belongs to the FliW family. As to quaternary structure, interacts with translational regulator CsrA and flagellin(s).

It is found in the cytoplasm. Acts as an anti-CsrA protein, binds CsrA and prevents it from repressing translation of its target genes, one of which is flagellin. Binds to flagellin and participates in the assembly of the flagellum. The sequence is that of Flagellar assembly factor FliW from Desulfitobacterium hafniense (strain DSM 10664 / DCB-2).